The primary structure comprises 264 residues: 1H-3-hydroxy-4-oxoquinoline 2,4-dioxygenase (264 aa).

Residues 30–32, 94–95, and Trp153 contribute to the substrate site; these read WCQ and TS. The active-site Proton donor/acceptor is His244.

This sequence belongs to the AB hydrolase superfamily. The cofactor is None. Contrary to most other dioxygenases, this enzyme does not require a cofactor for catalysis..

It catalyses the reaction 3-hydroxy-1H-quinolin-4-one + O2 = N-formylanthranilate + CO + H(+). In terms of biological role, ring-cleaving dioxygenase involved in oxoquinoline degradation and utilization. The sequence is that of 1H-3-hydroxy-4-oxoquinoline 2,4-dioxygenase (qdo) from Pseudomonas putida (Arthrobacter siderocapsulatus).